The following is a 511-amino-acid chain: Putative thymidine phosphorylase 1 (511 aa).

It belongs to the thymidine/pyrimidine-nucleoside phosphorylase family. Type 2 subfamily.

The catalysed reaction is thymidine + phosphate = 2-deoxy-alpha-D-ribose 1-phosphate + thymine. In Acidovorax sp. (strain JS42), this protein is Putative thymidine phosphorylase 1.